The chain runs to 183 residues: Putative lipoprotein LpqE (183 aa).

The signal sequence occupies residues 1–30 (MSRFKISLPALATRVAVLGFLTLMASVLGG). A lipid anchor (N-palmitoyl cysteine) is attached at Cys-31. The S-diacylglycerol cysteine moiety is linked to residue Cys-31.

Its subcellular location is the cell membrane. The protein is Putative lipoprotein LpqE (lpqE) of Mycobacterium leprae (strain TN).